Here is a 457-residue protein sequence, read N- to C-terminus: tRNA-2-methylthio-N(6)-dimethylallyladenosine synthase (457 aa).

Positions 3–120 constitute an MTTase N-terminal domain; the sequence is KKVYVKTFGC…LPQMIDKRRE (118 aa). 6 residues coordinate [4Fe-4S] cluster: cysteine 12, cysteine 49, cysteine 83, cysteine 157, cysteine 161, and cysteine 164. A Radical SAM core domain is found at 143 to 377; that stretch reads RVDGPSAFVS…QATIEENVQR (235 aa). In terms of domain architecture, TRAM spans 380–447; that stretch reads DSMVGKIERI…PHSLRGELVL (68 aa).

It belongs to the methylthiotransferase family. MiaB subfamily. Monomer. It depends on [4Fe-4S] cluster as a cofactor.

The protein resides in the cytoplasm. It catalyses the reaction N(6)-dimethylallyladenosine(37) in tRNA + (sulfur carrier)-SH + AH2 + 2 S-adenosyl-L-methionine = 2-methylsulfanyl-N(6)-dimethylallyladenosine(37) in tRNA + (sulfur carrier)-H + 5'-deoxyadenosine + L-methionine + A + S-adenosyl-L-homocysteine + 2 H(+). Its function is as follows. Catalyzes the methylthiolation of N6-(dimethylallyl)adenosine (i(6)A), leading to the formation of 2-methylthio-N6-(dimethylallyl)adenosine (ms(2)i(6)A) at position 37 in tRNAs that read codons beginning with uridine. This is tRNA-2-methylthio-N(6)-dimethylallyladenosine synthase from Paraburkholderia xenovorans (strain LB400).